The following is a 1084-amino-acid chain: Autophagy-related protein 11 (1084 aa).

2 coiled-coil regions span residues 585 to 739 (VQNL…LTES) and 847 to 879 (VIRR…TNDK). Disordered stretches follow at residues 925-961 (SMIP…NMNR) and 973-1007 (NIGS…STNA). 2 stretches are compositionally biased toward low complexity: residues 940–949 (SNTNNSNPSS) and 973–993 (NIGS…NGNN). Residues 994–1007 (KPETNIDTTSSTNA) show a composition bias toward polar residues.

This sequence belongs to the ATG11 family. As to quaternary structure, homodimer and potential homooligomers. Interacts with ATG1 kinase and the ATG19 and ATG34 cargo protein transporters. Interacts with ATG9, ATG17 and ATG20.

The protein resides in the preautophagosomal structure membrane. It localises to the vacuole membrane. In terms of biological role, involved in cytoplasm to vacuole transport (Cvt), pexophagy, mitophagy and nucleophagy. Recruits mitochondria for their selective degradation via autophagy (mitophagy) during starvation, through its interaction with ATG32. Works as scaffold proteins that recruit ATG proteins to the pre-autophagosome (PAS), the site of vesicle/autophagosome formation. Required for ATG9 anterograde transport from the mitochondria to the PAS. Also recruits the ATG19-prAPE1 complex to the PAS. Required for the Cvt vesicles completion. In Kluyveromyces marxianus (strain DMKU3-1042 / BCC 29191 / NBRC 104275) (Yeast), this protein is Autophagy-related protein 11.